Here is an 81-residue protein sequence, read N- to C-terminus: MSRKCMLTGKKANNAYSVSFSHRRNKRLQMANLQWKRIWDDQQGCFVRLKLSTKAIKTLEHRSLHALAKEAGLDLSKYVVK.

This sequence belongs to the bacterial ribosomal protein bL28 family.

The protein is Large ribosomal subunit protein bL28 of Gloeobacter violaceus (strain ATCC 29082 / PCC 7421).